Here is a 152-residue protein sequence, read N- to C-terminus: Superoxide dismutase [Cu-Zn] (152 aa).

The Cu cation site is built by His45, His47, and His62. Cys56 and Cys145 are oxidised to a cystine. Zn(2+) contacts are provided by His62, His70, His79, and Asp82. His119 contributes to the Cu cation binding site.

This sequence belongs to the Cu-Zn superoxide dismutase family. As to quaternary structure, homodimer. Cu cation serves as cofactor. Zn(2+) is required as a cofactor.

It localises to the cytoplasm. It carries out the reaction 2 superoxide + 2 H(+) = H2O2 + O2. In terms of biological role, destroys radicals which are normally produced within the cells and which are toxic to biological systems. The protein is Superoxide dismutase [Cu-Zn] (SODCC) of Carica papaya (Papaya).